Here is a 366-residue protein sequence, read N- to C-terminus: Beta sliding clamp (366 aa).

Belongs to the beta sliding clamp family. Forms a ring-shaped head-to-tail homodimer around DNA which binds and tethers DNA polymerases and other proteins to the DNA. The DNA replisome complex has a single clamp-loading complex (3 tau and 1 each of delta, delta', psi and chi subunits) which binds 3 Pol III cores (1 core on the leading strand and 2 on the lagging strand) each with a beta sliding clamp dimer. Additional proteins in the replisome are other copies of gamma, psi and chi, Ssb, DNA helicase and RNA primase.

It localises to the cytoplasm. Functionally, confers DNA tethering and processivity to DNA polymerases and other proteins. Acts as a clamp, forming a ring around DNA (a reaction catalyzed by the clamp-loading complex) which diffuses in an ATP-independent manner freely and bidirectionally along dsDNA. Initially characterized for its ability to contact the catalytic subunit of DNA polymerase III (Pol III), a complex, multichain enzyme responsible for most of the replicative synthesis in bacteria; Pol III exhibits 3'-5' exonuclease proofreading activity. The beta chain is required for initiation of replication as well as for processivity of DNA replication. This chain is Beta sliding clamp (dnaN), found in Buchnera aphidicola subsp. Acyrthosiphon pisum (strain APS) (Acyrthosiphon pisum symbiotic bacterium).